The chain runs to 235 residues: MENKNQKHNNEFHEKNQQSQKDNNNVKKENLHEDQSDLNDANFDDGGKKNKLKNDIKKLNHLVDSLKNENNNKQAKIESLERQINLLNENFKSEVIKKASEAQTKLDEKIKEFQAKYETELKHAKKYALKSSAIELIDIVSNFELAVNSKVTNPEIANYLKGFQMFANMFKNYFQQNGITEIPVNLNDDFNAEVMQAFETQKAPNTQPNKVIKIIKKGYKLHDIVLVPATVIVSE.

2 stretches are compositionally biased toward basic and acidic residues: residues Met-1 to Asn-16 and Asn-24 to Gln-35. A disordered region spans residues Met-1–Lys-51.

It belongs to the GrpE family. As to quaternary structure, homodimer.

Its subcellular location is the cytoplasm. Participates actively in the response to hyperosmotic and heat shock by preventing the aggregation of stress-denatured proteins, in association with DnaK and GrpE. It is the nucleotide exchange factor for DnaK and may function as a thermosensor. Unfolded proteins bind initially to DnaJ; upon interaction with the DnaJ-bound protein, DnaK hydrolyzes its bound ATP, resulting in the formation of a stable complex. GrpE releases ADP from DnaK; ATP binding to DnaK triggers the release of the substrate protein, thus completing the reaction cycle. Several rounds of ATP-dependent interactions between DnaJ, DnaK and GrpE are required for fully efficient folding. The chain is Protein GrpE from Malacoplasma penetrans (strain HF-2) (Mycoplasma penetrans).